Reading from the N-terminus, the 474-residue chain is Semenogelin-2 (474 aa).

Positions 1–23 are cleaved as a signal peptide; the sequence is MKSIILFVLSLLLILEKQAAVMG. Disordered regions lie at residues 24 to 62, 132 to 158, 173 to 194, 226 to 247, and 272 to 474; these read QKGG…SKGS, GGQA…LSSQ, KEQA…QSSY, VREE…DRLQ, and NLNQ…SSTE. Polar residues-rich tracts occupy residues 31 to 40, 137 to 158, and 174 to 194; these read QLPSGSSQFP, RGTQ…LSSQ, and EQAS…QSSY. The span at 292 to 310 shows a compositional bias: basic and acidic residues; the sequence is RTEERQLNHGEKSVQKDVS. Polar residues predominate over residues 325 to 334; that stretch reads KSQNQVTIHS. The span at 335–346 shows a compositional bias: basic and acidic residues; that stretch reads QDQEHGHKENKM. Residues 372-397 show a composition bias toward polar residues; the sequence is GSISIQTEEQIHGKSQNQVRIPSQAQ. Over residues 399–426 the composition is skewed to basic and acidic residues; that stretch reads YGHKENKISYRSSSTEERRLNSGEKDVQ. The segment covering 445–455 has biased composition (polar residues); that stretch reads KSQNQVTIPSQ. Basic and acidic residues predominate over residues 456–465; the sequence is DQEHGHKENK.

It belongs to the semenogelin family. As to quaternary structure, interacts with SERPINA5.

The protein resides in the secreted. In terms of biological role, participates in the formation of a gel matrix (sperm coagulum) entrapping the accessory gland secretions and ejaculated spermatozoa. In Gorilla gorilla gorilla (Western lowland gorilla), this protein is Semenogelin-2 (SEMG2).